We begin with the raw amino-acid sequence, 273 residues long: 3-methyl-2-oxobutanoate hydroxymethyltransferase (273 aa).

2 residues coordinate Mg(2+): Asp-53 and Asp-92. 3-methyl-2-oxobutanoate is bound by residues 53–54 (DS), Asp-92, and Lys-120. Glu-122 lines the Mg(2+) pocket. The active-site Proton acceptor is Glu-189.

This sequence belongs to the PanB family. As to quaternary structure, homodecamer; pentamer of dimers. Mg(2+) serves as cofactor.

The protein localises to the cytoplasm. The enzyme catalyses 3-methyl-2-oxobutanoate + (6R)-5,10-methylene-5,6,7,8-tetrahydrofolate + H2O = 2-dehydropantoate + (6S)-5,6,7,8-tetrahydrofolate. The protein operates within cofactor biosynthesis; (R)-pantothenate biosynthesis; (R)-pantoate from 3-methyl-2-oxobutanoate: step 1/2. Catalyzes the reversible reaction in which hydroxymethyl group from 5,10-methylenetetrahydrofolate is transferred onto alpha-ketoisovalerate to form ketopantoate. The protein is 3-methyl-2-oxobutanoate hydroxymethyltransferase of Cupriavidus taiwanensis (strain DSM 17343 / BCRC 17206 / CCUG 44338 / CIP 107171 / LMG 19424 / R1) (Ralstonia taiwanensis (strain LMG 19424)).